A 118-amino-acid chain; its full sequence is Protein BEX4 (118 aa).

The interval 14-50 (VEKDKKDKKGGKASKQSEEEPHHLEEVENKKPGGNVR) is disordered. Residues 28 to 44 (KQSEEEPHHLEEVENKK) are compositionally biased toward basic and acidic residues. Positions 30–88 (SEEEPHHLEEVENKKPGGNVRRKVRRLVPNFLWAIPNRHVDRNEGGEDVGRFVVQGTEV) are interaction with SIRT2. Positions 30 to 118 (SEEEPHHLEE…DNHYDFCLIP (89 aa)) are interaction with alpha-tubulin. Cys115 contacts Zn(2+).

This sequence belongs to the BEX family. Interacts with alpha-tubulin. Interacts with SIRT2. Ubiquitinated and degraded by the proteasome. As to expression, expressed in both Sertoli and germ cells as well as interstitial area of the testis (at protein level).

It localises to the cytoplasm. Its subcellular location is the cytoskeleton. It is found in the spindle pole. The protein resides in the nucleus. Functionally, may play a role in microtubule deacetylation by negatively regulating the SIRT2 deacetylase activity toward alpha-tubulin and thereby participate in the control of cell cycle progression and genomic stability. In absence of reductive stress, acts as a pseudosubstrate for the CRL2(FEM1B) complex: associates with FEM1B via zinc, thereby preventing association between FEM1B and its substrates. This Mus musculus (Mouse) protein is Protein BEX4.